The following is a 794-amino-acid chain: Ribonucleoside-diphosphate reductase large subunit (794 aa).

In terms of domain architecture, ATP-cone spans 1-92; it reads MHVIKRDGGQ…VSNLHKETKK (92 aa). Residues 5–6, 11–17, Thr53, and Asp57 each bind ATP; these read KR and EGVMFDK. Residues Ser202 and Ser217 each coordinate GDP. Cys218 and Cys444 form a disulfide bridge. DTTP-binding positions include 226 to 228, Lys243, Arg256, and 263 to 264; these read DSI and AG. Asn427 contacts GDP. Asn427 serves as the catalytic Proton acceptor. The active-site Cysteine radical intermediate is the Cys429. GDP contacts are provided by residues Glu431 and 604–607; that span reads TAST. Glu431 serves as the catalytic Proton acceptor.

The protein belongs to the ribonucleoside diphosphate reductase large chain family. In terms of assembly, heterodimer of a large and a small subunit.

The protein localises to the cytoplasm. It carries out the reaction a 2'-deoxyribonucleoside 5'-diphosphate + [thioredoxin]-disulfide + H2O = a ribonucleoside 5'-diphosphate + [thioredoxin]-dithiol. Under complex allosteric control mediated by deoxynucleoside triphosphates and ATP binding to separate specificity and activation sites on the M1 subunit. The type of nucleotide bound at the specificity site determines substrate preference. It seems probable that ATP makes the enzyme reduce CDP and UDP, dGTP favors ADP reduction and dTTP favors GDP reduction. Stimulated by ATP and inhibited by dATP binding to the activity site. Provides the precursors necessary for DNA synthesis. Catalyzes the biosynthesis of deoxyribonucleotides from the corresponding ribonucleotides. In Danio rerio (Zebrafish), this protein is Ribonucleoside-diphosphate reductase large subunit (rrm1).